The chain runs to 377 residues: Chaperone protein DnaJ (377 aa).

The region spanning 3–67 is the J domain; it reads DYYDLLGVGR…QTRARYDQFG (65 aa). Residues 133–215 form a CR-type zinc finger; it reads GQEQEIKIPH…CGGQGVRQVR (83 aa). 8 residues coordinate Zn(2+): cysteine 146, cysteine 149, cysteine 163, cysteine 166, cysteine 189, cysteine 192, cysteine 203, and cysteine 206. CXXCXGXG motif repeat units follow at residues 146–153, 163–170, 189–196, and 203–210; these read CDTCGGSG, CGTCGGAG, CPNCGGTG, and CNACGGQG.

It belongs to the DnaJ family. In terms of assembly, homodimer. The cofactor is Zn(2+).

It localises to the cytoplasm. Functionally, participates actively in the response to hyperosmotic and heat shock by preventing the aggregation of stress-denatured proteins and by disaggregating proteins, also in an autonomous, DnaK-independent fashion. Unfolded proteins bind initially to DnaJ; upon interaction with the DnaJ-bound protein, DnaK hydrolyzes its bound ATP, resulting in the formation of a stable complex. GrpE releases ADP from DnaK; ATP binding to DnaK triggers the release of the substrate protein, thus completing the reaction cycle. Several rounds of ATP-dependent interactions between DnaJ, DnaK and GrpE are required for fully efficient folding. Also involved, together with DnaK and GrpE, in the DNA replication of plasmids through activation of initiation proteins. The protein is Chaperone protein DnaJ of Parasynechococcus marenigrum (strain WH8102).